The chain runs to 366 residues: MVVLGSTGSIGKNALKIAKKFGVEIEALSCGKNIALINEQIQVFKPKKVAVLDPNDLNNLEPLGAEVFVGLEGIDAMIEECASNLVLNAIVGVAGLRASFKSLQRNKKLALANKESLVSAGHLLDISQITPIDSEHFGLWALLQNKTLKPKSLIISASGGAFRDTPLELIAIQNAQNALKHPNWSMGSKITIDSASMVNKLFEILETYWLFGASLKIDALIERSSIVHALVEFEDNSVIAHLASADMKLPISYAINPKLASLNASIKPLDLYALSAIKFEPISMERYTLWRYKDLLLENPKLGVVLNASNEVAMKKFLNQEIAFGGFIQIISQALELYAKKSFKFSTLDEVLELDKEVRDRFKNYR.

The NADPH site is built by Thr7, Gly8, Ser9, Ile10, Gly31, Lys32, Asn33, and Asn113. Lys114 lines the 1-deoxy-D-xylulose 5-phosphate pocket. Glu115 provides a ligand contact to NADPH. A Mn(2+)-binding site is contributed by Asp133. 1-deoxy-D-xylulose 5-phosphate is bound by residues Ser134, Glu135, Ser158, and His181. Position 135 (Glu135) interacts with Mn(2+). An NADPH-binding site is contributed by Gly187. Residues Ser194, Asn199, Lys200, and Glu203 each contribute to the 1-deoxy-D-xylulose 5-phosphate site. Glu203 contributes to the Mn(2+) binding site.

This sequence belongs to the DXR family. The cofactor is Mg(2+). Requires Mn(2+) as cofactor.

It catalyses the reaction 2-C-methyl-D-erythritol 4-phosphate + NADP(+) = 1-deoxy-D-xylulose 5-phosphate + NADPH + H(+). It functions in the pathway isoprenoid biosynthesis; isopentenyl diphosphate biosynthesis via DXP pathway; isopentenyl diphosphate from 1-deoxy-D-xylulose 5-phosphate: step 1/6. Functionally, catalyzes the NADPH-dependent rearrangement and reduction of 1-deoxy-D-xylulose-5-phosphate (DXP) to 2-C-methyl-D-erythritol 4-phosphate (MEP). This Helicobacter pylori (strain G27) protein is 1-deoxy-D-xylulose 5-phosphate reductoisomerase.